The sequence spans 165 residues: Phosphopantetheine adenylyltransferase (165 aa).

Ser-9 contacts substrate. Residues 9-10 (SF) and His-17 contribute to the ATP site. Residues Lys-41, Ile-75, and Arg-89 each contribute to the substrate site. ATP is bound by residues 90-92 (GVR), Glu-100, and 125-131 (YLFVRSD).

It belongs to the bacterial CoaD family. As to quaternary structure, homohexamer. Mg(2+) is required as a cofactor.

The protein localises to the cytoplasm. The catalysed reaction is (R)-4'-phosphopantetheine + ATP + H(+) = 3'-dephospho-CoA + diphosphate. Its pathway is cofactor biosynthesis; coenzyme A biosynthesis; CoA from (R)-pantothenate: step 4/5. In terms of biological role, reversibly transfers an adenylyl group from ATP to 4'-phosphopantetheine, yielding dephospho-CoA (dPCoA) and pyrophosphate. The chain is Phosphopantetheine adenylyltransferase from Borrelia duttonii (strain Ly).